The sequence spans 495 residues: UDP-glycosyltransferase 73C11 (495 aa).

The active-site Proton acceptor is His-24. An an anthocyanidin-binding site is contributed by His-24. Asp-129 functions as the Charge relay in the catalytic mechanism. UDP-alpha-D-glucose-binding residues include Gln-358, His-373, Trp-376, Asn-377, Ser-378, and Glu-381. Position 396 (Gly-396) interacts with an anthocyanidin. Residues Asp-397 and Gln-398 each coordinate UDP-alpha-D-glucose.

Belongs to the UDP-glycosyltransferase family.

The catalysed reaction is oleanolate + UDP-alpha-D-glucose = oleanolate 3-O-beta-D-glucoside + UDP + H(+). In terms of biological role, catalyzes the transfer of a glucose (Glc) moiety from UDP-Glc to the C-3 position of the oleanane sapogenins oleanolate and hederagenin, and to the C-28 carboxylic group of the lupane sapogenin betulinate. The monoglucosylated hederagenin 3-O-beta-D-glucoside is a feeding deterrent of the yellow-striped flea beetle (Phyllotreta nemorum). The sequence is that of UDP-glycosyltransferase 73C11 from Barbarea vulgaris (Yellow rocket).